The following is a 176-amino-acid chain: ADP-ribosylation factor-like protein 11 (176 aa).

Gly2 carries the N-myristoyl glycine lipid modification. Residues 19-26, 63-67, and 122-125 each bind GTP; these read GLDSAGKT, DIGGQ, and NKQE.

It belongs to the small GTPase superfamily. Arf family.

Its function is as follows. May play a role in apoptosis. May act as a tumor suppressor. In Mus musculus (Mouse), this protein is ADP-ribosylation factor-like protein 11 (Arl11).